We begin with the raw amino-acid sequence, 264 residues long: 3-methyl-2-oxobutanoate hydroxymethyltransferase (264 aa).

Residues D45 and D84 each contribute to the Mg(2+) site. 3-methyl-2-oxobutanoate-binding positions include 45–46, D84, and K112; that span reads DS. E114 is a Mg(2+) binding site. The active-site Proton acceptor is the E181.

The protein belongs to the PanB family. As to quaternary structure, homodecamer; pentamer of dimers. Mg(2+) is required as a cofactor.

The protein resides in the cytoplasm. The catalysed reaction is 3-methyl-2-oxobutanoate + (6R)-5,10-methylene-5,6,7,8-tetrahydrofolate + H2O = 2-dehydropantoate + (6S)-5,6,7,8-tetrahydrofolate. The protein operates within cofactor biosynthesis; (R)-pantothenate biosynthesis; (R)-pantoate from 3-methyl-2-oxobutanoate: step 1/2. Its function is as follows. Catalyzes the reversible reaction in which hydroxymethyl group from 5,10-methylenetetrahydrofolate is transferred onto alpha-ketoisovalerate to form ketopantoate. In Tolumonas auensis (strain DSM 9187 / NBRC 110442 / TA 4), this protein is 3-methyl-2-oxobutanoate hydroxymethyltransferase.